We begin with the raw amino-acid sequence, 641 residues long: Protein TIC 62, chloroplastic (641 aa).

A chloroplast-targeting transit peptide spans 1 to 63 (MEGTCFLRGQ…LSLRASGPIR (63 aa)). N-acetylalanine is present on A64. NADP(+) is bound at residue 84–113 (VFVAGATGKVGSRTVRELLKLGFRVRAGVR). Residues 328 to 641 (SKRPYVPPPK…SPLPSPVTNH (314 aa)) form a disordered region. Positions 359 to 372 (APKEDEAPPKEKNV) are enriched in basic and acidic residues. 2 tandem repeats follow at residues 376 to 397 (PLSPYASYEDLKPPTSPIPNST) and 444 to 465 (PLSPYARYENLKPPSSPSPTAS). Residues 376-638 (PLSPYASYED…PPTSPLPSPV (263 aa)) form a 4 X 22 AA approximate repeats region. Residues 393-402 (IPNSTTSVSP) show a composition bias toward low complexity. Basic and acidic residues predominate over residues 435-444 (KQVEEKKERP). Residues 485–528 (SSTVAKTVTETAVATSVTETSVATSVPETAVATSVTETAAPATS) show a composition bias toward low complexity. Repeat 3 spans residues 532 to 553 (PLSPYAIYADLKPPTSPTPAST). Over residues 599 to 612 (AIDTSLASGDNTAQ) the composition is skewed to polar residues. The stretch at 617 to 638 (PLSPYTMYADMKPPTSPLPSPV) is repeat 4. Positions 630-641 (PTSPLPSPVTNH) are enriched in pro residues.

Part of the Tic complex. Interacts with TIC110 and TIC55. Interacts with LFNR1 and LFNR2. Component of high molecular weight thylakoid LFNRs-containing protein complexes containing LIR1, LFNR1, LFNR2, TIC62 and TROL proteins. As to expression, expressed in cotyledons and leaves, but not in roots.

It is found in the plastid. It localises to the chloroplast inner membrane. Its subcellular location is the chloroplast stroma. The protein resides in the chloroplast thylakoid. Its function is as follows. Involved in protein precursor import into chloroplasts. Part of the redox regulon consisting of TIC32, TIC 55 and TIC62. Acts as a membrane anchor of LFNR1 and LFNR2. Has a NADPH-dependent dehydrogenase activity, but only after preincubation with lipids. The chain is Protein TIC 62, chloroplastic from Arabidopsis thaliana (Mouse-ear cress).